The sequence spans 419 residues: MAQEVIKIRGGRTLNGEVNISGAKNSAVAIIPATLLAQGHVKLEGLPQISDVKTLVSLLEDLNIKASLNGMELEVDTTEIQNAALPNNKVESLRASYYMMGAMLGRFKKCVIGLPGGCPLGPRPIDQHIKGFKALGAEIDESSTTSMKIEAKELKGAHIFLDMVSVGATINIMLAAVYATGQTVIENAAKEPEVVDVANFLTSMGANIKGAGTSTIKINGVKELHGSEYQVIPDRIEAGTYMCIAAACGENVILNNIVPKHVETLTAKFSELGVNVDVRDERIRINNNAPYQFVDIKTLVYPGFATDLQQPITPLLFMANGPSFVTDTIYPERFKHVEELKRMGANIEVDEGTATIKPSTLHGAEVYASDLRAGACLIIAGLIAEGVTTIYNVKHIYRGYTDIVEHLKALGADIWTETV.

A phosphoenolpyruvate-binding site is contributed by 24–25 (KN). Residue R94 participates in UDP-N-acetyl-alpha-D-glucosamine binding. Residue C118 is the Proton donor of the active site. C118 is modified (2-(S-cysteinyl)pyruvic acid O-phosphothioketal). UDP-N-acetyl-alpha-D-glucosamine-binding positions include 123–127 (RPIDQ), D307, and I329.

This sequence belongs to the EPSP synthase family. MurA subfamily.

It is found in the cytoplasm. The enzyme catalyses phosphoenolpyruvate + UDP-N-acetyl-alpha-D-glucosamine = UDP-N-acetyl-3-O-(1-carboxyvinyl)-alpha-D-glucosamine + phosphate. The protein operates within cell wall biogenesis; peptidoglycan biosynthesis. In terms of biological role, cell wall formation. Adds enolpyruvyl to UDP-N-acetylglucosamine. In Staphylococcus aureus (strain MSSA476), this protein is UDP-N-acetylglucosamine 1-carboxyvinyltransferase 2.